Here is a 396-residue protein sequence, read N- to C-terminus: Probable arginine kinase F46H5.3 (396 aa).

The region spanning 47–129 (KIEEGYAKLQ…FDPLIQDYHN (83 aa)) is the Phosphagen kinase N-terminal domain. 102–106 (GVGVY) contributes to the substrate binding site. The 238-residue stretch at 159-396 (FINSTRIRCG…AHLIALEKAA (238 aa)) folds into the Phosphagen kinase C-terminal domain. Residues 162-166 (STRIR) and histidine 226 contribute to the ATP site. Glutamate 266 contacts substrate. Arginine 270 contacts ATP. Cysteine 312 contributes to the substrate binding site. Residues 321–325 (RASVH), 349–354 (RGIHGE), and aspartate 364 contribute to the ATP site. Glutamate 354 contributes to the substrate binding site.

Belongs to the ATP:guanido phosphotransferase family.

The enzyme catalyses L-arginine + ATP = N(omega)-phospho-L-arginine + ADP + H(+). In Caenorhabditis elegans, this protein is Probable arginine kinase F46H5.3.